The primary structure comprises 266 residues: rRNA adenine N-6-methyltransferase (266 aa).

The S-adenosyl-L-methionine site is built by His-14, Thr-16, Gly-41, Glu-62, Asp-87, and Asn-103.

It belongs to the class I-like SAM-binding methyltransferase superfamily. rRNA adenine N(6)-methyltransferase family.

Involved in erythromycin resistance. The chain is rRNA adenine N-6-methyltransferase (ermFU) from Bacteroides fragilis.